The following is a 350-amino-acid chain: Solute carrier family 35 member E4 (350 aa).

8 helical membrane-spanning segments follow: residues 40–60 (VLGQ…LLAG), 79–99 (PLLL…WGAQ), 110–130 (VLLL…GLST), 135–155 (LAQL…ALLL), 218–238 (VTLL…AALV), 258–278 (VLLS…LLAL), 279–299 (TSAL…LILS), and 301–321 (LLFG…TLSG). Residues 125–179 (NVGLSTVPLDLAQLATTTTPLFTLALSALLLGRRHHPLQFAAMGPLCLGAACSLA) enclose the EamA domain.

This sequence belongs to the TPT transporter family. SLC35E subfamily.

It localises to the membrane. Functionally, putative transporter. In Rattus norvegicus (Rat), this protein is Solute carrier family 35 member E4 (Slc35e4).